Consider the following 512-residue polypeptide: Retinaldehyde dehydrogenase 3 (512 aa).

The tract at residues 1 to 23 is disordered; that stretch reads MATANGAVENGQPDGKPPALPRP. N-acetylalanine is present on Ala-2. NAD(+) contacts are provided by residues Lys-204, Glu-207, and 257–262; that span reads GSTEVG. Glu-280 serves as the catalytic Proton acceptor. Cys-314 serves as the catalytic Nucleophile. Residues Gln-361 and Glu-411 each coordinate NAD(+).

It belongs to the aldehyde dehydrogenase family. Homotetramer.

The protein resides in the cytoplasm. It catalyses the reaction all-trans-retinal + NAD(+) + H2O = all-trans-retinoate + NADH + 2 H(+). The catalysed reaction is retinal + NAD(+) + H2O = retinoate + NADH + 2 H(+). It carries out the reaction all-trans-13,14-dihydroretinal + NAD(+) + H2O = all-trans-13,14-dihydroretinoate + NADH + 2 H(+). Its pathway is cofactor metabolism; retinol metabolism. In terms of biological role, catalyzes the NAD-dependent oxidation of aldehyde substrates, such as all-trans-retinal and all-trans-13,14-dihydroretinal, to their corresponding carboxylic acids, all-trans-retinoate and all-trans-13,14-dihydroretinoate, respectively. High specificity for all-trans-retinal as substrate, can also accept acetaldehyde as substrate in vitro but with lower affinity. Required for the biosynthesis of normal levels of retinoate in the embryonic ocular and nasal regions; a critical lipid in the embryonic development of the eye and the nasal region. This Rattus norvegicus (Rat) protein is Retinaldehyde dehydrogenase 3 (Aldh1a3).